The chain runs to 1270 residues: DNA-directed RNA polymerase subunit beta (1270 aa).

It belongs to the RNA polymerase beta chain family. In terms of assembly, the RNAP catalytic core consists of 2 alpha, 1 beta, 1 beta' and 1 omega subunit. When a sigma factor is associated with the core the holoenzyme is formed, which can initiate transcription.

It catalyses the reaction RNA(n) + a ribonucleoside 5'-triphosphate = RNA(n+1) + diphosphate. Its function is as follows. DNA-dependent RNA polymerase catalyzes the transcription of DNA into RNA using the four ribonucleoside triphosphates as substrates. This is DNA-directed RNA polymerase subunit beta from Christiangramia forsetii (strain DSM 17595 / CGMCC 1.15422 / KT0803) (Gramella forsetii).